A 616-amino-acid polypeptide reads, in one-letter code: Sulfite reductase [NADPH] hemoprotein beta-component (616 aa).

Residues 1-10 (MDDHSPRDAA) are compositionally biased toward basic and acidic residues. The disordered stretch occupies residues 1–35 (MDDHSPRDAAETPAPGPAATPAKRVYETPPTSRPI). A compositionally biased stretch (low complexity) spans 11–22 (ETPAPGPAATPA). 4 residues coordinate [4Fe-4S] cluster: Cys470, Cys476, Cys515, and Cys519. Cys519 contacts siroheme.

Belongs to the nitrite and sulfite reductase 4Fe-4S domain family. In terms of assembly, alpha(8)-beta(8). The alpha component is a flavoprotein, the beta component is a hemoprotein. The cofactor is siroheme. [4Fe-4S] cluster serves as cofactor.

It carries out the reaction hydrogen sulfide + 3 NADP(+) + 3 H2O = sulfite + 3 NADPH + 4 H(+). Its pathway is sulfur metabolism; hydrogen sulfide biosynthesis; hydrogen sulfide from sulfite (NADPH route): step 1/1. In terms of biological role, component of the sulfite reductase complex that catalyzes the 6-electron reduction of sulfite to sulfide. This is one of several activities required for the biosynthesis of L-cysteine from sulfate. In Methylobacterium radiotolerans (strain ATCC 27329 / DSM 1819 / JCM 2831 / NBRC 15690 / NCIMB 10815 / 0-1), this protein is Sulfite reductase [NADPH] hemoprotein beta-component.